We begin with the raw amino-acid sequence, 152 residues long: Leptin (152 aa).

Positions 1-26 (MDHILALVLALLPLSLCVALPGALDA) are cleaved as a signal peptide. A disulfide bond links Cys109 and Cys152.

The protein belongs to the leptin family. In terms of tissue distribution, expressed mostly in the liver.

The protein localises to the secreted. In terms of biological role, may function as part of a signaling pathway that acts to regulate the size of the body fat depot. In Takifugu rubripes (Japanese pufferfish), this protein is Leptin (lep).